The sequence spans 105 residues: MMINKEQDLNQLETNQEQSVEQNQTDEKRKPKPNFKRAKKYCRFCAIGQLRIDFIDDLEAIKRFLSPYAKINPRRITGNCNMHQRHVANALKRARYLALVPFIKD.

The interval 1–34 (MMINKEQDLNQLETNQEQSVEQNQTDEKRKPKPN) is disordered. Over residues 9 to 23 (LNQLETNQEQSVEQN) the composition is skewed to polar residues.

This sequence belongs to the bacterial ribosomal protein bS18 family. As to quaternary structure, part of the 30S ribosomal subunit. Forms a tight heterodimer with protein bS6.

Its function is as follows. Binds as a heterodimer with protein bS6 to the central domain of the 16S rRNA, where it helps stabilize the platform of the 30S subunit. The chain is Small ribosomal subunit protein bS18 from Mycoplasma genitalium (strain ATCC 33530 / DSM 19775 / NCTC 10195 / G37) (Mycoplasmoides genitalium).